The following is a 434-amino-acid chain: Putative magnesium transporter MRS2-D (434 aa).

Disordered regions lie at residues 126–171 (AASP…DGEA) and 279–311 (EASELEDHSSRDEEGVEGGGGGDGDDETIAGGG). Residues 279 to 291 (EASELEDHSSRDE) are compositionally biased toward basic and acidic residues. The next 2 membrane-spanning stretches (helical) occupy residues 367–387 (GILLSTGTLVSSCAIAVTGVF) and 405–425 (FPCAAAGIVAGSLALYLAALL).

Belongs to the CorA metal ion transporter (MIT) (TC 1.A.35.5) family.

The protein localises to the membrane. Functionally, putative magnesium transporter. The polypeptide is Putative magnesium transporter MRS2-D (MRS2-D) (Oryza sativa subsp. japonica (Rice)).